The sequence spans 248 residues: 3-deoxy-manno-octulosonate cytidylyltransferase (248 aa).

Belongs to the KdsB family.

It is found in the cytoplasm. The catalysed reaction is 3-deoxy-alpha-D-manno-oct-2-ulosonate + CTP = CMP-3-deoxy-beta-D-manno-octulosonate + diphosphate. Its pathway is nucleotide-sugar biosynthesis; CMP-3-deoxy-D-manno-octulosonate biosynthesis; CMP-3-deoxy-D-manno-octulosonate from 3-deoxy-D-manno-octulosonate and CTP: step 1/1. It participates in bacterial outer membrane biogenesis; lipopolysaccharide biosynthesis. In terms of biological role, activates KDO (a required 8-carbon sugar) for incorporation into bacterial lipopolysaccharide in Gram-negative bacteria. The protein is 3-deoxy-manno-octulosonate cytidylyltransferase of Citrobacter koseri (strain ATCC BAA-895 / CDC 4225-83 / SGSC4696).